We begin with the raw amino-acid sequence, 285 residues long: PHO85 cyclin-7 (285 aa).

Over residues 1–14 (MELSSPSKKTTTSP) the composition is skewed to low complexity. The tract at residues 1–42 (MELSSPSKKTTTSPINIPGGNRDNLIIGPHSHSFKTDPFSSN) is disordered. S69 carries the phosphoserine modification.

Belongs to the cyclin family. PHO80 subfamily. In terms of assembly, forms a cyclin-CDK complex with PHO85. Interacts with the substrate proteins MMR1 and YJL084C. Interacts with the CDK inhibitor (CKI) PHO81.

It localises to the cytoplasm. With respect to regulation, the PCL7-PHO85 cyclin-CDK is inhibited by PHO81 in low-phosphate conditions. Functionally, cyclin partner of the cyclin-dependent kinase (CDK) PHO85. Together with cyclin PCL6, controls glycogen phosphorylase and glycogen synthase activities in response to nutrient availablility. The PCL7-PHO85 cyclin-CDK holoenzyme has GLC8 kinase activity and phosphorylates and inactivates the phosphatase PP1-2 inhibitor GLC8, causing activation of PP1-2, which then dephosphorylates and activates glycogen phosphorylase. PCL7-PHO85 also phosphorylates MMR1 and YJL084C. This Saccharomyces cerevisiae (strain ATCC 204508 / S288c) (Baker's yeast) protein is PHO85 cyclin-7 (PCL7).